The sequence spans 189 residues: dCTP deaminase (189 aa).

DCTP-binding positions include 112–117 (KSTYAR), 136–138 (TLE), Gln157, Tyr171, and Gln181. Catalysis depends on Glu138, which acts as the Proton donor/acceptor.

Belongs to the dCTP deaminase family. Homotrimer.

The catalysed reaction is dCTP + H2O + H(+) = dUTP + NH4(+). Its pathway is pyrimidine metabolism; dUMP biosynthesis; dUMP from dCTP (dUTP route): step 1/2. Functionally, catalyzes the deamination of dCTP to dUTP. The chain is dCTP deaminase from Paraburkholderia phymatum (strain DSM 17167 / CIP 108236 / LMG 21445 / STM815) (Burkholderia phymatum).